Here is a 98-residue protein sequence, read N- to C-terminus: Large ribosomal subunit protein uL23 (98 aa).

It belongs to the universal ribosomal protein uL23 family. Part of the 50S ribosomal subunit. Contacts protein L29, and trigger factor when it is bound to the ribosome.

Functionally, one of the early assembly proteins it binds 23S rRNA. One of the proteins that surrounds the polypeptide exit tunnel on the outside of the ribosome. Forms the main docking site for trigger factor binding to the ribosome. The sequence is that of Large ribosomal subunit protein uL23 from Nitrobacter winogradskyi (strain ATCC 25391 / DSM 10237 / CIP 104748 / NCIMB 11846 / Nb-255).